Here is a 265-residue protein sequence, read N- to C-terminus: Probable enoyl-CoA hydratase 1, peroxisomal (265 aa).

Position 1 is an N-acetylmethionine (methionine 1). Substrate is bound by residues serine 68–leucine 72 and alanine 112. The short motif at serine 263–leucine 265 is the Microbody targeting signal element.

It belongs to the enoyl-CoA hydratase/isomerase family.

The protein localises to the peroxisome. The catalysed reaction is a (3S)-3-hydroxyacyl-CoA = a (2E)-enoyl-CoA + H2O. The enzyme catalyses a 4-saturated-(3S)-3-hydroxyacyl-CoA = a (3E)-enoyl-CoA + H2O. It functions in the pathway lipid metabolism; fatty acid beta-oxidation. Its function is as follows. Straight-chain enoyl-CoA thioesters from C4 up to at least C16 are processed, although with decreasing catalytic rate. This Arabidopsis thaliana (Mouse-ear cress) protein is Probable enoyl-CoA hydratase 1, peroxisomal.